A 280-amino-acid polypeptide reads, in one-letter code: Intimin (280 aa).

The region spanning 1–92 is the Big-1 domain; it reads ITEIKADKTT…MLKLLEVEFF (92 aa). In terms of domain architecture, BIG2 spans 127–173; it reads ANGGNGKYTWYSANPAIASVDPSSGQVTLKDKGETTITVVSGDKQTA. The cysteines at positions 201 and 278 are disulfide-linked.

Belongs to the intimin/invasin family.

It is found in the cell outer membrane. An inverse autotransporter. The sequence is that of Intimin (eaeA) from Hafnia alvei.